We begin with the raw amino-acid sequence, 331 residues long: Doxorubicin resistance ATP-binding protein DrrA (331 aa).

An ABC transporter domain is found at 8–240 (VVVNGVRKTY…AGDTFCEIVP (233 aa)). 42–49 (GPNGAGKT) serves as a coordination point for ATP.

It belongs to the ABC transporter superfamily. Drug exporter-1 (DrugE1) (TC 3.A.1.105) family. The complex is composed of two ATP-binding proteins (DrrA) and two transmembrane proteins (DrrB and DrrC).

The protein resides in the cell membrane. Functionally, part of the ABC transporter complex DrrABC involved in doxorubicin resistance. Responsible for energy coupling to the transport system. Binds ATP. The sequence is that of Doxorubicin resistance ATP-binding protein DrrA (drrA) from Mycobacterium tuberculosis (strain CDC 1551 / Oshkosh).